A 111-amino-acid polypeptide reads, in one-letter code: Large ribosomal subunit protein uL22 (111 aa).

It belongs to the universal ribosomal protein uL22 family. In terms of assembly, part of the 50S ribosomal subunit.

Functionally, this protein binds specifically to 23S rRNA; its binding is stimulated by other ribosomal proteins, e.g. L4, L17, and L20. It is important during the early stages of 50S assembly. It makes multiple contacts with different domains of the 23S rRNA in the assembled 50S subunit and ribosome. Its function is as follows. The globular domain of the protein is located near the polypeptide exit tunnel on the outside of the subunit, while an extended beta-hairpin is found that lines the wall of the exit tunnel in the center of the 70S ribosome. This Mycoplasma capricolum subsp. capricolum (strain California kid / ATCC 27343 / NCTC 10154) protein is Large ribosomal subunit protein uL22.